Here is a 254-residue protein sequence, read N- to C-terminus: Flavin-dependent thymidylate synthase (254 aa).

One can recognise a ThyX domain in the interval 7–237 (LRVQLIAKTE…PAVFADFEIT (231 aa)). DUMP is bound by residues 92–95 (ELIR), 103–107 (QLSQR), and His176. FAD contacts are provided by residues 95–97 (RHR) and Gln103. Positions 95 to 105 (RHRHFSYSQLS) match the ThyX motif motif. Residues 192–194 (NYR) and His198 contribute to the FAD site. Position 203 (Arg203) interacts with dUMP. Arg203 acts as the Involved in ionization of N3 of dUMP, leading to its activation in catalysis.

It belongs to the thymidylate synthase ThyX family. Homotetramer. FAD is required as a cofactor.

The catalysed reaction is dUMP + (6R)-5,10-methylene-5,6,7,8-tetrahydrofolate + NADPH + H(+) = dTMP + (6S)-5,6,7,8-tetrahydrofolate + NADP(+). Its pathway is pyrimidine metabolism; dTTP biosynthesis. In terms of biological role, catalyzes the reductive methylation of 2'-deoxyuridine-5'-monophosphate (dUMP) to 2'-deoxythymidine-5'-monophosphate (dTMP) while utilizing 5,10-methylenetetrahydrofolate (mTHF) as the methyl donor, and NADPH and FADH(2) as the reductant. The sequence is that of Flavin-dependent thymidylate synthase from Mycobacterium leprae (strain Br4923).